The chain runs to 359 residues: Archaemetzincin-2 (359 aa).

His254 is a binding site for Zn(2+). Glu255 acts as the Proton acceptor in catalysis. Positions 258, 264, 265, 270, 289, and 292 each coordinate Zn(2+).

This sequence belongs to the peptidase M54 family. The cofactor is Zn(2+).

Functionally, probable zinc metalloprotease. The sequence is that of Archaemetzincin-2 (Amz2) from Rattus norvegicus (Rat).